A 162-amino-acid chain; its full sequence is NADH-quinone oxidoreductase subunit I (162 aa).

4Fe-4S ferredoxin-type domains follow at residues 53–83 (LRRY…IESE) and 93–122 (TRYD…ETRV). [4Fe-4S] cluster is bound by residues cysteine 63, cysteine 66, cysteine 69, cysteine 73, cysteine 102, cysteine 105, cysteine 108, and cysteine 112.

The protein belongs to the complex I 23 kDa subunit family. As to quaternary structure, NDH-1 is composed of 14 different subunits. Subunits NuoA, H, J, K, L, M, N constitute the membrane sector of the complex. The cofactor is [4Fe-4S] cluster.

It is found in the cell inner membrane. The catalysed reaction is a quinone + NADH + 5 H(+)(in) = a quinol + NAD(+) + 4 H(+)(out). Functionally, NDH-1 shuttles electrons from NADH, via FMN and iron-sulfur (Fe-S) centers, to quinones in the respiratory chain. The immediate electron acceptor for the enzyme in this species is believed to be ubiquinone. Couples the redox reaction to proton translocation (for every two electrons transferred, four hydrogen ions are translocated across the cytoplasmic membrane), and thus conserves the redox energy in a proton gradient. The chain is NADH-quinone oxidoreductase subunit I from Nitrosomonas eutropha (strain DSM 101675 / C91 / Nm57).